The sequence spans 105 residues: Protein LITTLE ZIPPER 2 (105 aa).

The interval 1–20 (MCLTTSEPPFPDTDTPTMRS) is disordered. A coiled-coil region spans residues 39-60 (NLTRRRRLLKEQKEMEMRNLKL).

Interacts with REV.

In terms of biological role, competitive inhibitor of the HD-ZIPIII transcription factors in shoot apical meristem (SAM) development. Acts by forming non-functional heterodimers. Part of a negative feedback loop. Essential for proper functioning of stem cells in the SAM. This chain is Protein LITTLE ZIPPER 2, found in Arabidopsis thaliana (Mouse-ear cress).